The sequence spans 366 residues: Isocitrate dehydrogenase [NAD] subunit alpha, mitochondrial (366 aa).

The N-terminal 27 residues, 1–27 (MAGSAWVSKVSRLLGAFHNTKQVTRGF), are a transit peptide targeting the mitochondrion. K77 carries the N6-succinyllysine modification. Position 101 is a phosphothreonine (T101). The substrate site is built by R115, R125, and R146. At K223 the chain carries N6-acetyllysine. D233, D257, and D261 together coordinate Mg(2+). Position 343 is an N6-acetyllysine; alternate (K343). N6-succinyllysine; alternate is present on K343. K350 is modified (N6-succinyllysine).

It belongs to the isocitrate and isopropylmalate dehydrogenases family. As to quaternary structure, heterooligomer of subunits alpha (IDH3A), beta (IDH3B), and gamma (IDH3G) in the apparent ratio of 2:1:1. The heterodimer containing one IDH3A and one IDH3B subunit and the heterodimer containing one IDH3A and one IDH3G subunit assemble into a heterotetramer (which contains two subunits of IDH3A, one of IDH3B and one of IDH3G) and further into the heterooctamer. Mg(2+) serves as cofactor. The cofactor is Mn(2+). As to expression, expressed in brown adipose tissue (BAT).

Its subcellular location is the mitochondrion. It carries out the reaction D-threo-isocitrate + NAD(+) = 2-oxoglutarate + CO2 + NADH. With respect to regulation, the heterotetramer and the heterodimer composed of IDH3A and IDH3G subunits can be allosterically activated by citrate (CIT) or/and ADP, and the two activators can act independently or synergistically. The heterodimer composed of IDH3A and IDH3B subunits cannot be allosterically regulated and the allosteric regulation of the heterotetramer is through the IDH3G subunit and not the IDH3B subunit. The IDH3G subunit contains the allosteric site which consists of a CIT-binding site and an ADP-binding site, and the binding of CIT and ADP causes conformational changes at the allosteric site which are transmitted to the active site in the catalytic subunit (IDH3A) through a cascade of conformational changes at the heterodimer interface, leading to stabilization of the isocitrate-binding at the active site and thus activation of the enzyme. ATP can activate the heterotetramer and the heterodimer composed of IDH3A and IDH3G subunits at low concentrations but inhibits their activities at high concentrations, whereas ATP exhibits only inhibitory effect on the heterodimer composed of IDH3A and IDH3B subunits. Its function is as follows. Catalytic subunit of the enzyme which catalyzes the decarboxylation of isocitrate (ICT) into alpha-ketoglutarate. The heterodimer composed of the alpha (IDH3A) and beta (IDH3B) subunits and the heterodimer composed of the alpha (IDH3A) and gamma (IDH3G) subunits, have considerable basal activity but the full activity of the heterotetramer (containing two subunits of IDH3A, one of IDH3B and one of IDH3G) requires the assembly and cooperative function of both heterodimers. This is Isocitrate dehydrogenase [NAD] subunit alpha, mitochondrial from Rattus norvegicus (Rat).